The following is a 2559-amino-acid chain: Ubiquitin carboxyl-terminal hydrolase 9X (2559 aa).

A compositionally biased stretch (polar residues) spans 1-44; it reads MTATTRGSPVGGNDNQGQAPDGQSQPPLQQNQTSSPDSSNENSP. The interval 1–64 is disordered; that stretch reads MTATTRGSPV…DAPPQIEDEE (64 aa). Ser-374, Ser-375, and Ser-588 each carry phosphoserine. The interval 967–999 is disordered; it reads QISSNMPSSPDSSSDSSTGSPGNHGNHYSDGPN. The span at 969 to 989 shows a compositional bias: low complexity; the sequence is SSNMPSSPDSSSDSSTGSPGN. One can recognise a USP domain in the interval 1557-1956; that stretch reads VGLKNAGATC…NAYILFYERM (400 aa). Cys-1566 acts as the Nucleophile in catalysis. Residues 1592 to 1633 are disordered; the sequence is GSDVDDDMSGDEKQDNESNVDPRDDVFGYPQQFEDKPPLSKT. Ser-1600 is modified (phosphoserine). Basic and acidic residues-rich tracts occupy residues 1601–1617 and 1624–1633; these read GDEKQDNESNVDPRDDV and FEDKPPLSKT. Cys-1727, His-1729, Cys-1771, and Cys-1774 together coordinate Zn(2+). His-1879 serves as the catalytic Proton acceptor. A Phosphoserine modification is found at Ser-2443. Over residues 2475–2484 the composition is skewed to acidic residues; the sequence is PEEEPDDQDA. The interval 2475–2559 is disordered; sequence PEEEPDDQDA…QTKGSVKCTY (85 aa). Composition is skewed to polar residues over residues 2503–2513 and 2527–2537; these read PGSQYQQNNHV and NNPQRTGQRAQ. Tyr-2540 is subject to Phosphotyrosine. At Ser-2547 the chain carries Phosphoserine. Thr-2551 is subject to Phosphothreonine.

This sequence belongs to the peptidase C19 family. In terms of assembly, interacts with SMAD4, MARK4, NUAK1 and BIRC5/survivin. Interacts with DCX. Interacts with OTUD4 and USP7; the interaction is direct. In terms of tissue distribution, highest levels in liver and brain with expression also detected in heart, muscle, spleen and kidney (at protein leve). Ubiquitously expressed in adult tissues.

The protein resides in the cytoplasm. It is found in the cytosol. It localises to the cell projection. The protein localises to the growth cone. Its subcellular location is the cytoskeleton. The protein resides in the cilium axoneme. The enzyme catalyses Thiol-dependent hydrolysis of ester, thioester, amide, peptide and isopeptide bonds formed by the C-terminal Gly of ubiquitin (a 76-residue protein attached to proteins as an intracellular targeting signal).. Deubiquitinase involved both in the processing of ubiquitin precursors and of ubiquitinated proteins. May therefore play an important regulatory role at the level of protein turnover by preventing degradation of proteins through the removal of conjugated ubiquitin. Specifically hydrolyzes 'Lys-11'-, followed by 'Lys-63'-, 'Lys-48'- and 'Lys-6'-linked polyubiquitins chains. Essential component of TGF-beta/BMP signaling cascade. Specifically deubiquitinates monoubiquitinated SMAD4, opposing the activity of E3 ubiquitin-protein ligase TRIM33. Deubiquitinates alkylation repair enzyme ALKBH3. OTUD4 recruits USP7 and USP9X to stabilize ALKBH3, thereby promoting the repair of alkylated DNA lesions. Deubiquitinates RNA demethylase enzyme ALKBH5, promoting its stability. Deubiquitinates mTORC2 complex component RICTOR at 'Lys-294' by removing 'Lys-63'-linked polyubiquitin chains, stabilizing RICTOR and enhancing its binding to MTOR, thus promoting mTORC2 complex assembly. Regulates chromosome alignment and segregation in mitosis by regulating the localization of BIRC5/survivin to mitotic centromeres. Involved in axonal growth and neuronal cell migration. Regulates cellular clock function by enhancing the protein stability and transcriptional activity of the core circadian protein BMAL1 via its deubiquitinating activity. Acts as a regulator of peroxisome import by mediating deubiquitination of PEX5: specifically deubiquitinates PEX5 monoubiquitinated at 'Cys-11' following its retrotranslocation into the cytosol, resetting PEX5 for a subsequent import cycle. Deubiquitinates PEG10. Inhibits the activation of the Hippo signaling pathway via deubiquitination of AMOTL2 at 'Lys-337' and 'Lys-404' which prohibits its interaction with and activation of LATS2. Loss of LATS2 activation and subsequent loss of YAP1 phosphorylation results in an increase in YAP1-driven transcription of target genes. This Mus musculus (Mouse) protein is Ubiquitin carboxyl-terminal hydrolase 9X.